The chain runs to 490 residues: Flap endonuclease 1 (490 aa).

The N-domain stretch occupies residues 1-106 (MGIKGLTKFL…DELTKRDERR (106 aa)). Residue Asp34 coordinates Mg(2+). DNA contacts are provided by Arg47 and Arg72. The Mg(2+) site is built by Asp88, Glu160, Glu162, Asp181, and Asp183. An I-domain region spans residues 124 to 266 (LIKKQSVRTI…STAYKLLKKY (143 aa)). Position 160 (Glu160) interacts with DNA. Residues Gly244 and Asp246 each contribute to the DNA site. A Mg(2+)-binding site is contributed by Asp246. The interaction with PCNA stretch occupies residues 351–359 (SQTCLDGFF). Disordered stretches follow at residues 364–396 (NERK…SLSC) and 421–490 (SSQA…SDED). Positions 430-442 (ENSSEAPNQSSEI) are enriched in polar residues. Basic and acidic residues predominate over residues 443-454 (KVNKIEENKDSE). The span at 455–469 (SSTVENTPSLQTKSP) shows a compositional bias: polar residues.

The protein belongs to the XPG/RAD2 endonuclease family. FEN1 subfamily. In terms of assembly, interacts with PCNA. Three molecules of FEN1 bind to one PCNA trimer with each molecule binding to one PCNA monomer. PCNA stimulates the nuclease activity without altering cleavage specificity. Mg(2+) serves as cofactor. In terms of processing, phosphorylated. Phosphorylation upon DNA damage induces relocalization to the nuclear plasma.

The protein resides in the nucleus. Its subcellular location is the nucleolus. The protein localises to the nucleoplasm. It localises to the mitochondrion. Its function is as follows. Structure-specific nuclease with 5'-flap endonuclease and 5'-3' exonuclease activities involved in DNA replication and repair. During DNA replication, cleaves the 5'-overhanging flap structure that is generated by displacement synthesis when DNA polymerase encounters the 5'-end of a downstream Okazaki fragment. It enters the flap from the 5'-end and then tracks to cleave the flap base, leaving a nick for ligation. Also involved in the long patch base excision repair (LP-BER) pathway, by cleaving within the apurinic/apyrimidinic (AP) site-terminated flap. Acts as a genome stabilization factor that prevents flaps from equilibrating into structures that lead to duplications and deletions. Also possesses 5'-3' exonuclease activity on nicked or gapped double-stranded DNA, and exhibits RNase H activity. Also involved in replication and repair of rDNA and in repairing mitochondrial DNA. The polypeptide is Flap endonuclease 1 (Cryptosporidium parvum (strain Iowa II)).